The primary structure comprises 494 residues: Probable cytosol aminopeptidase (494 aa).

K260 and D265 together coordinate Mn(2+). Residue K272 is part of the active site. Mn(2+) contacts are provided by D283, D342, and E344. The active site involves R346.

Belongs to the peptidase M17 family. The cofactor is Mn(2+).

It is found in the cytoplasm. The enzyme catalyses Release of an N-terminal amino acid, Xaa-|-Yaa-, in which Xaa is preferably Leu, but may be other amino acids including Pro although not Arg or Lys, and Yaa may be Pro. Amino acid amides and methyl esters are also readily hydrolyzed, but rates on arylamides are exceedingly low.. It carries out the reaction Release of an N-terminal amino acid, preferentially leucine, but not glutamic or aspartic acids.. Its function is as follows. Presumably involved in the processing and regular turnover of intracellular proteins. Catalyzes the removal of unsubstituted N-terminal amino acids from various peptides. The chain is Probable cytosol aminopeptidase from Bacillus mycoides (strain KBAB4) (Bacillus weihenstephanensis).